A 381-amino-acid chain; its full sequence is Dof zinc finger protein 2 (381 aa).

The segment at 19 to 81 (MLMGANPNPN…ARPQKEKALN (63 aa)) is disordered. Low complexity-rich tracts occupy residues 23-32 (ANPNPNGSSN) and 40-59 (SAAS…AAGA). The span at 68–79 (TERRARPQKEKA) shows a compositional bias: basic and acidic residues. The segment at 80–134 (LNCPRCNSTNTKFCYYNNYSLQQPRYFCKTCRRYWTEGGSLRNVPVGGGSRKNKR) adopts a Dof-type zinc-finger fold. Residues Cys-82, Cys-85, Cys-107, and Cys-110 each contribute to the Zn(2+) site. Residues 329-349 (AGDANSGGDHQYDHGKNQGGG) are disordered.

The protein resides in the nucleus. Its function is as follows. Transcription factor that may transactivate seed storage protein genes in developing seeds. This Oryza sativa subsp. japonica (Rice) protein is Dof zinc finger protein 2.